The sequence spans 425 residues: Protein CLP1 homolog (425 aa).

Residues glutamate 18, lysine 59, and 121-126 (DVGKST) contribute to the ATP site.

It belongs to the Clp1 family. Clp1 subfamily.

The protein localises to the nucleus. Its function is as follows. Required for endonucleolytic cleavage during polyadenylation-dependent pre-mRNA 3'-end formation. This is Protein CLP1 homolog (cbc) from Drosophila persimilis (Fruit fly).